A 213-amino-acid polypeptide reads, in one-letter code: Kynurenine formamidase (213 aa).

Residue W18 participates in substrate binding. H48, H52, and D54 together coordinate Zn(2+). H58 acts as the Proton donor/acceptor in catalysis. Positions 160 and 172 each coordinate Zn(2+).

It belongs to the Cyclase 1 superfamily. KynB family. In terms of assembly, homodimer. Zn(2+) is required as a cofactor.

It carries out the reaction N-formyl-L-kynurenine + H2O = L-kynurenine + formate + H(+). It functions in the pathway amino-acid degradation; L-tryptophan degradation via kynurenine pathway; L-kynurenine from L-tryptophan: step 2/2. Functionally, catalyzes the hydrolysis of N-formyl-L-kynurenine to L-kynurenine, the second step in the kynurenine pathway of tryptophan degradation. This chain is Kynurenine formamidase, found in Burkholderia orbicola (strain MC0-3).